Reading from the N-terminus, the 144-residue chain is Nucleoside diphosphate kinase (144 aa).

ATP contacts are provided by Lys-11, Phe-59, Arg-87, Thr-93, Arg-104, and Asn-114. The active-site Pros-phosphohistidine intermediate is the His-117.

It belongs to the NDK family. In terms of assembly, homotetramer. The cofactor is Mg(2+).

Its subcellular location is the cytoplasm. It catalyses the reaction a 2'-deoxyribonucleoside 5'-diphosphate + ATP = a 2'-deoxyribonucleoside 5'-triphosphate + ADP. The enzyme catalyses a ribonucleoside 5'-diphosphate + ATP = a ribonucleoside 5'-triphosphate + ADP. Its function is as follows. Major role in the synthesis of nucleoside triphosphates other than ATP. The ATP gamma phosphate is transferred to the NDP beta phosphate via a ping-pong mechanism, using a phosphorylated active-site intermediate. In Aliivibrio salmonicida (strain LFI1238) (Vibrio salmonicida (strain LFI1238)), this protein is Nucleoside diphosphate kinase.